Consider the following 498-residue polypeptide: Beta-amylase 5 (498 aa).

The substrate site is built by Asp-56, His-96, and Asp-104. The active-site Proton donor is the Glu-189. Substrate is bound by residues Lys-298, His-303, and Thr-345. The active-site Proton acceptor is Glu-383. Residues 384-385 (NA) and Arg-423 contribute to the substrate site.

Belongs to the glycosyl hydrolase 14 family. Detected in phloem sieve elements.

It localises to the cytoplasm. It carries out the reaction Hydrolysis of (1-&gt;4)-alpha-D-glucosidic linkages in polysaccharides so as to remove successive maltose units from the non-reducing ends of the chains.. Its function is as follows. Beta-amylase activity. Major cytosolic beta-amylase isoform in rosette leaves and inflorescences stems. This is Beta-amylase 5 (BAM5) from Arabidopsis thaliana (Mouse-ear cress).